The primary structure comprises 328 residues: UPF0421 protein SERP1427 (328 aa).

4 helical membrane passes run 26-46, 61-81, 109-129, and 132-152; these read LFCM…IVTI, LPAT…FGDQ, AVLT…FNFF, and LLTA…ILPP.

It belongs to the UPF0421 family.

It is found in the cell membrane. The sequence is that of UPF0421 protein SERP1427 from Staphylococcus epidermidis (strain ATCC 35984 / DSM 28319 / BCRC 17069 / CCUG 31568 / BM 3577 / RP62A).